The primary structure comprises 126 residues: MPEPAKSAPAPKKGSKKAVTKTQKKGDKKRKRARKESYSIYVYKVLKQVHPDTGISSKAMSIMNSFVNDIFERIAGEASRLAHYNKRSTITSREIQTAVRLLLPGELAKHAVSEGTKAVTKYTSSK.

Positions 1-12 (MPEPAKSAPAPK) are enriched in low complexity. The tract at residues 1–35 (MPEPAKSAPAPKKGSKKAVTKTQKKGDKKRKRARK) is disordered. 2 positions are modified to N6-acetyllysine: K6 and K13. Over residues 13 to 34 (KGSKKAVTKTQKKGDKKRKRAR) the composition is skewed to basic residues. Residue S15 is modified to Phosphoserine. An N6-acetyllysine mark is found at K16 and K21. A glycan (O-linked (GlcNAc) serine) is linked at S113. A Glycyl lysine isopeptide (Lys-Gly) (interchain with G-Cter in ubiquitin) cross-link involves residue K121.

It belongs to the histone H2B family. As to quaternary structure, the nucleosome is a histone octamer containing two molecules each of H2A, H2B, H3 and H4 assembled in one H3-H4 heterotetramer and two H2A-H2B heterodimers. The octamer wraps approximately 147 bp of DNA. Monoubiquitination of Lys-121 by the BRE1 gives a specific tag for epigenetic transcriptional activation and is also prerequisite for histone H3 'Lys-4' and 'Lys-79' methylation. In terms of processing, phosphorylated on Ser-15 during apoptosis; which facilitates apoptotic chromatin condensation. Post-translationally, glcNAcylation at Ser-113 promotes monoubiquitination of Lys-121. It fluctuates in response to extracellular glucose, and associates with transcribed genes.

It is found in the nucleus. The protein resides in the chromosome. In terms of biological role, core component of nucleosome. Nucleosomes wrap and compact DNA into chromatin, limiting DNA accessibility to the cellular machineries which require DNA as a template. Histones thereby play a central role in transcription regulation, DNA repair, DNA replication and chromosomal stability. DNA accessibility is regulated via a complex set of post-translational modifications of histones, also called histone code, and nucleosome remodeling. This is Histone H2B 7 (H2B-VII) from Gallus gallus (Chicken).